We begin with the raw amino-acid sequence, 152 residues long: Clitocypin-4/-3 (152 aa).

It belongs to the protease inhibitor I48 family. In terms of assembly, homodimer.

Binds and inhibits cysteine proteinases. Inhibits most strongly papain and cathepsin L, more weakly bromelain and cathepsin B while it is completely ineffective against cathepsin H. The chain is Clitocypin-4/-3 (clt4) from Clitocybe nebularis (Clouded agaric).